The sequence spans 165 residues: Chorismate pyruvate-lyase (165 aa).

Substrate-binding residues include Met-35, Arg-77, Leu-115, and Glu-156.

Belongs to the UbiC family. Monomer.

The protein localises to the cytoplasm. The enzyme catalyses chorismate = 4-hydroxybenzoate + pyruvate. It participates in cofactor biosynthesis; ubiquinone biosynthesis. Removes the pyruvyl group from chorismate, with concomitant aromatization of the ring, to provide 4-hydroxybenzoate (4HB) for the ubiquinone pathway. This chain is Chorismate pyruvate-lyase, found in Salmonella gallinarum (strain 287/91 / NCTC 13346).